A 476-amino-acid chain; its full sequence is Ubiquinone biosynthesis monooxygenase COQ6, mitochondrial (476 aa).

A mitochondrion-targeting transit peptide spans 1–42; that stretch reads MAARIGPMAGLLCVRWWSTAQLAARGGPLVACRRWTSSSTDS.

It belongs to the UbiH/COQ6 family. Component of a multi-subunit COQ enzyme complex, composed of at least COQ3, COQ4, COQ5, COQ6, COQ7 and COQ9. Interacts with COQ8B and COQ7. Requires FAD as cofactor. In the kidney, expressed almost exclusively in glomerular podocytes. In the inner ear, expressed in the spiral ganglion, as well as in stria vascularis and spiral ligament cells.

Its subcellular location is the mitochondrion inner membrane. It is found in the golgi apparatus. It localises to the cell projection. It catalyses the reaction 4-hydroxy-3-(all-trans-decaprenyl)benzoate + 2 reduced [2Fe-2S]-[ferredoxin] + O2 + 2 H(+) = 3,4-dihydroxy-5-(all-trans-decaprenyl)benzoate + 2 oxidized [2Fe-2S]-[ferredoxin] + H2O. The catalysed reaction is 2-methoxy-6-(all-trans-decaprenyl)phenol + 2 reduced [2Fe-2S]-[ferredoxin] + O2 + 2 H(+) = 2-methoxy-6-(all-trans-decaprenyl)benzene-1,4-diol + 2 oxidized [2Fe-2S]-[ferredoxin] + H2O. It participates in cofactor biosynthesis; ubiquinone biosynthesis. Functionally, FAD-dependent monooxygenase required for two non-consecutive steps during ubiquinone biosynthesis. Required for the C5-ring hydroxylation during ubiquinone biosynthesis by catalyzing the hydroxylation of 4-hydroxy-3-(all-trans-decaprenyl)benzoic acid to 3,4-dihydroxy-5-(all-trans-decaprenyl)benzoic acid. Also acts downstream of COQ4, for the C1-hydroxylation during ubiquinone biosynthesis by catalyzing the hydroxylation of 2-methoxy-6-(all-trans-decaprenyl)phenol to 2-methoxy-6-(all-trans-decaprenyl)benzene-1,4-diol. The electrons required for the hydroxylation reaction are funneled indirectly to COQ6 from NADPH via a ferredoxin/ferredoxin reductase system composed of FDX2 and FDXR. In Rattus norvegicus (Rat), this protein is Ubiquinone biosynthesis monooxygenase COQ6, mitochondrial.